A 92-amino-acid polypeptide reads, in one-letter code: PqqA binding protein (92 aa).

Belongs to the PqqD family. As to quaternary structure, monomer. Interacts with PqqE.

The protein operates within cofactor biosynthesis; pyrroloquinoline quinone biosynthesis. Functionally, functions as a PqqA binding protein and presents PqqA to PqqE, in the pyrroloquinoline quinone (PQQ) biosynthetic pathway. This chain is PqqA binding protein, found in Xanthomonas axonopodis pv. citri (strain 306).